We begin with the raw amino-acid sequence, 237 residues long: Phosphatidylserine decarboxylase proenzyme (237 aa).

S206 (schiff-base intermediate with substrate; via pyruvic acid) is an active-site residue. S206 bears the Pyruvic acid (Ser); by autocatalysis mark.

This sequence belongs to the phosphatidylserine decarboxylase family. PSD-A subfamily. In terms of assembly, heterodimer of a large membrane-associated beta subunit and a small pyruvoyl-containing alpha subunit. The cofactor is pyruvate. In terms of processing, is synthesized initially as an inactive proenzyme. Formation of the active enzyme involves a self-maturation process in which the active site pyruvoyl group is generated from an internal serine residue via an autocatalytic post-translational modification. Two non-identical subunits are generated from the proenzyme in this reaction, and the pyruvate is formed at the N-terminus of the alpha chain, which is derived from the carboxyl end of the proenzyme. The post-translation cleavage follows an unusual pathway, termed non-hydrolytic serinolysis, in which the side chain hydroxyl group of the serine supplies its oxygen atom to form the C-terminus of the beta chain, while the remainder of the serine residue undergoes an oxidative deamination to produce ammonia and the pyruvoyl prosthetic group on the alpha chain.

It localises to the cell membrane. The catalysed reaction is a 1,2-diacyl-sn-glycero-3-phospho-L-serine + H(+) = a 1,2-diacyl-sn-glycero-3-phosphoethanolamine + CO2. It participates in phospholipid metabolism; phosphatidylethanolamine biosynthesis; phosphatidylethanolamine from CDP-diacylglycerol: step 2/2. Its function is as follows. Catalyzes the formation of phosphatidylethanolamine (PtdEtn) from phosphatidylserine (PtdSer). The polypeptide is Phosphatidylserine decarboxylase proenzyme (Nocardia farcinica (strain IFM 10152)).